A 66-amino-acid polypeptide reads, in one-letter code: Large ribosomal subunit protein bL33c (66 aa).

It belongs to the bacterial ribosomal protein bL33 family.

It localises to the plastid. The protein localises to the chloroplast. The sequence is that of Large ribosomal subunit protein bL33c (rpl33) from Arabidopsis thaliana (Mouse-ear cress).